A 271-amino-acid polypeptide reads, in one-letter code: Calretinin (271 aa).

EF-hand domains are found at residues 16 to 51, 63 to 98, 107 to 142, 151 to 186, 195 to 230, and 235 to 270; these read LTASQFLEIWKHFDADGNGYIEGKELENFFQELEKA, NFGEKMKEFMQKYDKNSDGKIEMAELAQILPTEENF, GSSAEFMEAWRKYDTDRSGYIEANELKGFLSDLLKK, KLQEYTQTILRMFDLNGDGKLGLSEMSRLLPVQENF, LTSEEFNAIFTFYDKDRSGYIDEHELDALLKDLYEK, and MNIQQLTNYRKSVMSLAEAGKLYRKDLEIVLCSEPP. Residues Asp-29, Asp-31, Asn-33, Tyr-35, Glu-40, Asp-76, Asn-78, Asp-80, Lys-82, Glu-87, Asp-120, Asp-122, Ser-124, Tyr-126, Glu-131, Asp-164, Asn-166, Asp-168, Lys-170, Glu-175, Asp-208, Asp-210, Ser-212, Tyr-214, and Glu-219 each coordinate Ca(2+). Tyr-214 carries the phosphotyrosine modification.

The protein belongs to the calbindin family. Brain.

It is found in the synapse. The protein resides in the cell projection. The protein localises to the dendrite. In terms of biological role, calcium-binding protein involved in calcium homeostasis and signal transduction. It plays a critical role in buffering intracellular calcium levels and modulating calcium-dependent signaling pathways. Predominantly expressed in specific neuronal populations, influences synaptic plasticity and neuronal excitability, contributing to learning and memory. During embryonic development, it facilitates neuronal differentiation and maturation. This chain is Calretinin, found in Homo sapiens (Human).